Reading from the N-terminus, the 446-residue chain is NAD(P)H sulfur oxidoreductase (CoA-dependent) (446 aa).

17 to 18 provides a ligand contact to FAD; sequence AA. Arginine 28 provides a ligand contact to CoA. FAD-binding positions include 39–40 and 46–48; these read EA and HAP. Residues 45 to 49, 66 to 67, and arginine 76 each bind CoA; these read SHAPC and HY. Cysteine 49 (redox-active) is an active-site residue. FAD is bound by residues valine 86, aspartate 284, and alanine 302. Residues asparagine 306 and lysine 362 each coordinate CoA. Residue tyrosine 426 coordinates FAD. CoA is bound by residues tryptophan 434 and arginine 442.

This sequence belongs to the class-III pyridine nucleotide-disulfide oxidoreductase family. The cofactor is FAD.

The enzyme catalyses hydrogen sulfide + NADP(+) = sulfur + NADPH. It catalyses the reaction hydrogen sulfide + NAD(+) = sulfur + NADH. Functionally, catalyzes the CoA-dependent reduction of elemental sulfur (S(0)) to produce hydrogen sulfide. This Pyrococcus abyssi (strain GE5 / Orsay) protein is NAD(P)H sulfur oxidoreductase (CoA-dependent).